Reading from the N-terminus, the 388-residue chain is MGKKAVHFGGGNIGRGFVGEFLHESGYEVVFVDVMDNVIDALNKHSSYTVTEISEEGEQQKVITNYRAINSKHNLDDVIKEISTADVVTCAVGPNILKFIAPPIAKGIDTRTLSKPLAVIACENAIGATDTLHGFIKENTDEARLPSLYSRAQFANSAIDRIVPTQDLGSGLNVKIEKFYEWVVEKTPFGDVGHPDIKDIHWVDNLEPYIERKLFTVNTGHATAAYYGYSAGKKTIHDALRDDRIRKEVNAALAETSRLIVEKHGISPEEQARYVSSIITRISNPHLEDIVQRVGRAPLRKLSRKERFIGPASQLAERGHTVTALMDAVEQALKFQNVPDDEESFELFKILKENSAADATTKLTGLEKEHPLYSRVLEKVDKVQKETK.

5-16 (AVHFGGGNIGRG) lines the NAD(+) pocket. K213 is a catalytic residue.

Belongs to the mannitol dehydrogenase family. Monomer.

It catalyses the reaction D-mannitol 1-phosphate + NAD(+) = beta-D-fructose 6-phosphate + NADH + H(+). In terms of biological role, catalyzes the NAD(H)-dependent interconversion of D-fructose 6-phosphate and D-mannitol 1-phosphate in the mannitol metabolic pathway. This Ajellomyces capsulatus (strain NAm1 / WU24) (Darling's disease fungus) protein is Mannitol-1-phosphate 5-dehydrogenase.